The primary structure comprises 138 residues: Phosphoribosyl-AMP cyclohydrolase (138 aa).

The interval 1-23 (MSEQSAPSPTPAAELSSDPASPL) is disordered. D100 contacts Mg(2+). C101 serves as a coordination point for Zn(2+). Mg(2+) contacts are provided by D102 and D104. Zn(2+) is bound by residues C117 and C124.

This sequence belongs to the PRA-CH family. As to quaternary structure, homodimer. It depends on Mg(2+) as a cofactor. Zn(2+) is required as a cofactor.

The protein resides in the cytoplasm. It carries out the reaction 1-(5-phospho-beta-D-ribosyl)-5'-AMP + H2O = 1-(5-phospho-beta-D-ribosyl)-5-[(5-phospho-beta-D-ribosylamino)methylideneamino]imidazole-4-carboxamide. Its pathway is amino-acid biosynthesis; L-histidine biosynthesis; L-histidine from 5-phospho-alpha-D-ribose 1-diphosphate: step 3/9. Catalyzes the hydrolysis of the adenine ring of phosphoribosyl-AMP. This Paenarthrobacter aurescens (strain TC1) protein is Phosphoribosyl-AMP cyclohydrolase.